A 501-amino-acid polypeptide reads, in one-letter code: Cytochrome P450 7A1 (501 aa).

A helical transmembrane segment spans residues 4–24 (ISLLGGIVTAVCCCLWLLLGM). Cys441 serves as a coordination point for heme.

This sequence belongs to the cytochrome P450 family. It depends on heme as a cofactor.

The protein localises to the endoplasmic reticulum membrane. The protein resides in the microsome membrane. It catalyses the reaction cholesterol + reduced [NADPH--hemoprotein reductase] + O2 = 7alpha-hydroxycholesterol + oxidized [NADPH--hemoprotein reductase] + H2O + H(+). The enzyme catalyses 4beta-hydroxycholesterol + reduced [NADPH--hemoprotein reductase] + O2 = 4beta,7alpha-dihydroxycholesterol + oxidized [NADPH--hemoprotein reductase] + H2O + H(+). It carries out the reaction lathosterol + reduced [NADPH--hemoprotein reductase] + O2 = 7alpha,8alpha-epoxy-5alpha-cholestan-3beta-ol + oxidized [NADPH--hemoprotein reductase] + H2O + H(+). The catalysed reaction is lathosterol + reduced [NADPH--hemoprotein reductase] + O2 = 5alpha-cholestan-7-oxo-3beta-ol + oxidized [NADPH--hemoprotein reductase] + H2O + H(+). It catalyses the reaction 7-dehydrocholesterol + reduced [NADPH--hemoprotein reductase] + O2 = 7-oxocholesterol + oxidized [NADPH--hemoprotein reductase] + H2O + H(+). The enzyme catalyses (24S)-hydroxycholesterol + reduced [NADPH--hemoprotein reductase] + O2 = (24S)-7alpha-dihydroxycholesterol + oxidized [NADPH--hemoprotein reductase] + H2O + H(+). It carries out the reaction (24R)-hydroxycholesterol + reduced [NADPH--hemoprotein reductase] + O2 = (24R)-7alpha-dihydroxycholesterol + oxidized [NADPH--hemoprotein reductase] + H2O + H(+). Its pathway is lipid metabolism; bile acid biosynthesis. It participates in steroid metabolism; cholesterol degradation. Functionally, a cytochrome P450 monooxygenase involved in the metabolism of endogenous cholesterol and its oxygenated derivatives (oxysterols). Mechanistically, uses molecular oxygen inserting one oxygen atom into a substrate, and reducing the second into a water molecule, with two electrons provided by NADPH via cytochrome P450 reductase (CPR; NADPH-ferrihemoprotein reductase). Functions as a critical regulatory enzyme of bile acid biosynthesis and cholesterol homeostasis. Catalyzes the hydroxylation of carbon hydrogen bond at 7-alpha position of cholesterol, a rate-limiting step in cholesterol catabolism and bile acid biosynthesis. 7-alpha hydroxylates several oxysterols, including 4beta-hydroxycholesterol and 24-hydroxycholesterol. Catalyzes the oxidation of the 7,8 double bond of 7-dehydrocholesterol and lathosterol with direct and predominant formation of the 7-keto derivatives. In Sus scrofa (Pig), this protein is Cytochrome P450 7A1 (CYP7A1).